Here is a 188-residue protein sequence, read N- to C-terminus: Elongation factor P (188 aa).

Lys34 carries the N6-(3,6-diaminohexanoyl)-5-hydroxylysine modification.

Belongs to the elongation factor P family. In terms of processing, may be beta-lysylated on the epsilon-amino group of Lys-34 by the combined action of EpmA and EpmB, and then hydroxylated on the C5 position of the same residue by EpmC (if this protein is present). Lysylation is critical for the stimulatory effect of EF-P on peptide-bond formation. The lysylation moiety may extend toward the peptidyltransferase center and stabilize the terminal 3-CCA end of the tRNA. Hydroxylation of the C5 position on Lys-34 may allow additional potential stabilizing hydrogen-bond interactions with the P-tRNA.

The protein resides in the cytoplasm. Its pathway is protein biosynthesis; polypeptide chain elongation. In terms of biological role, involved in peptide bond synthesis. Alleviates ribosome stalling that occurs when 3 or more consecutive Pro residues or the sequence PPG is present in a protein, possibly by augmenting the peptidyl transferase activity of the ribosome. Modification of Lys-34 is required for alleviation. This Proteus mirabilis (strain HI4320) protein is Elongation factor P.